A 236-amino-acid chain; its full sequence is Phosphoribosylaminoimidazole-succinocarboxamide synthase (236 aa).

It belongs to the SAICAR synthetase family.

The catalysed reaction is 5-amino-1-(5-phospho-D-ribosyl)imidazole-4-carboxylate + L-aspartate + ATP = (2S)-2-[5-amino-1-(5-phospho-beta-D-ribosyl)imidazole-4-carboxamido]succinate + ADP + phosphate + 2 H(+). It participates in purine metabolism; IMP biosynthesis via de novo pathway; 5-amino-1-(5-phospho-D-ribosyl)imidazole-4-carboxamide from 5-amino-1-(5-phospho-D-ribosyl)imidazole-4-carboxylate: step 1/2. This is Phosphoribosylaminoimidazole-succinocarboxamide synthase from Lysinibacillus sphaericus (strain C3-41).